The chain runs to 329 residues: NADH-quinone oxidoreductase subunit H (329 aa).

9 helical membrane passes run 9–29 (LIKI…ATYI), 42–62 (GPCY…IKLF), 75–95 (FIFT…MAPI), 117–137 (IGFL…ILAG), 154–174 (IQLL…LMVV), 188–208 (GGFL…FLIA), 238–258 (LKWG…SFVI), 269–291 (WGFI…LSMW), and 309–329 (WKIM…IILI).

It belongs to the complex I subunit 1 family. In terms of assembly, NDH-1 is composed of 14 different subunits. Subunits NuoA, H, J, K, L, M, N constitute the membrane sector of the complex.

The protein localises to the cell inner membrane. The catalysed reaction is a quinone + NADH + 5 H(+)(in) = a quinol + NAD(+) + 4 H(+)(out). Functionally, NDH-1 shuttles electrons from NADH, via FMN and iron-sulfur (Fe-S) centers, to quinones in the respiratory chain. The immediate electron acceptor for the enzyme in this species is believed to be ubiquinone. Couples the redox reaction to proton translocation (for every two electrons transferred, four hydrogen ions are translocated across the cytoplasmic membrane), and thus conserves the redox energy in a proton gradient. This subunit may bind ubiquinone. The protein is NADH-quinone oxidoreductase subunit H of Helicobacter pylori (strain HPAG1).